Here is a 98-residue protein sequence, read N- to C-terminus: NADH-ubiquinone oxidoreductase chain 4L (98 aa).

3 helical membrane passes run 1 to 21 (MAPINLNLILAFSLALLGVLI), 28 to 48 (STLLCLEGMMLSLFILMTLLI), and 59 to 79 (APLILLVFSACEAGVGLALLV).

This sequence belongs to the complex I subunit 4L family. In terms of assembly, core subunit of respiratory chain NADH dehydrogenase (Complex I) which is composed of 45 different subunits.

It is found in the mitochondrion inner membrane. It catalyses the reaction a ubiquinone + NADH + 5 H(+)(in) = a ubiquinol + NAD(+) + 4 H(+)(out). Functionally, core subunit of the mitochondrial membrane respiratory chain NADH dehydrogenase (Complex I) which catalyzes electron transfer from NADH through the respiratory chain, using ubiquinone as an electron acceptor. Part of the enzyme membrane arm which is embedded in the lipid bilayer and involved in proton translocation. The chain is NADH-ubiquinone oxidoreductase chain 4L (MT-ND4L) from Isoodon macrourus (Short-nosed bandicoot).